The chain runs to 338 residues: GTPase Obg (338 aa).

The Obg domain occupies 1–159 (MKFLDKAIIH…RILRLELILI (159 aa)). The OBG-type G domain maps to 160–333 (AHVGTLGLPN…IVKKIYDFLK (174 aa)). Residues 166–173 (GLPNSGKS), 191–195 (FTTLK), 213–216 (DIPG), 283–286 (NKID), and 314–316 (SAI) contribute to the GTP site. Residues serine 173 and threonine 193 each coordinate Mg(2+).

Belongs to the TRAFAC class OBG-HflX-like GTPase superfamily. OBG GTPase family. In terms of assembly, monomer. Requires Mg(2+) as cofactor.

It localises to the cytoplasm. Functionally, an essential GTPase which binds GTP, GDP and possibly (p)ppGpp with moderate affinity, with high nucleotide exchange rates and a fairly low GTP hydrolysis rate. Plays a role in control of the cell cycle, stress response, ribosome biogenesis and in those bacteria that undergo differentiation, in morphogenesis control. The polypeptide is GTPase Obg (Buchnera aphidicola subsp. Baizongia pistaciae (strain Bp)).